A 67-amino-acid polypeptide reads, in one-letter code: Conotoxin TsMMSK-B021 (67 aa).

The N-terminal stretch at 1–20 (MMSKLGVLLTICLLLFPLTA) is a signal peptide. The propeptide occupies 21–50 (VQLDGDQPADLPELRAQDFAPERSPWFDPV). 3 cysteine pairs are disulfide-bonded: Cys53-Cys65, Cys54-Cys61, and Cys58-Cys64. The residue at position 63 (Pro63) is a 4-hydroxyproline.

The protein belongs to the conotoxin M superfamily. Expressed by the venom duct.

It is found in the secreted. This is Conotoxin TsMMSK-B021 from Conus tessulatus (Tessellate cone).